A 346-amino-acid chain; its full sequence is Protein RecA (346 aa).

67-74 contacts ATP; that stretch reads GPESSGKT.

The protein belongs to the RecA family.

Its subcellular location is the cytoplasm. Can catalyze the hydrolysis of ATP in the presence of single-stranded DNA, the ATP-dependent uptake of single-stranded DNA by duplex DNA, and the ATP-dependent hybridization of homologous single-stranded DNAs. It interacts with LexA causing its activation and leading to its autocatalytic cleavage. This chain is Protein RecA, found in Mycobacterium marinum (strain ATCC BAA-535 / M).